The primary structure comprises 101 residues: NAD(P)H-quinone oxidoreductase subunit 4L, chloroplastic (101 aa).

3 helical membrane-spanning segments follow: residues 2–22 (MLEH…YGLI), 32–52 (MCLE…SDFF), and 61–81 (IFSI…LAIV).

This sequence belongs to the complex I subunit 4L family. In terms of assembly, NDH is composed of at least 16 different subunits, 5 of which are encoded in the nucleus.

The protein resides in the plastid. The protein localises to the chloroplast thylakoid membrane. The enzyme catalyses a plastoquinone + NADH + (n+1) H(+)(in) = a plastoquinol + NAD(+) + n H(+)(out). It carries out the reaction a plastoquinone + NADPH + (n+1) H(+)(in) = a plastoquinol + NADP(+) + n H(+)(out). In terms of biological role, NDH shuttles electrons from NAD(P)H:plastoquinone, via FMN and iron-sulfur (Fe-S) centers, to quinones in the photosynthetic chain and possibly in a chloroplast respiratory chain. The immediate electron acceptor for the enzyme in this species is believed to be plastoquinone. Couples the redox reaction to proton translocation, and thus conserves the redox energy in a proton gradient. This is NAD(P)H-quinone oxidoreductase subunit 4L, chloroplastic from Daucus carota (Wild carrot).